A 424-amino-acid chain; its full sequence is CinA-like protein (424 aa).

Belongs to the CinA family.

This is CinA-like protein from Shewanella putrefaciens (strain CN-32 / ATCC BAA-453).